The primary structure comprises 455 residues: F-box/FBD/LRR-repeat protein At3g51530 (455 aa).

Residues 1–26 (MKNSERFSAAKPLMEQGGKSSRKPGF) form a disordered region. One can recognise an F-box domain in the interval 29 to 75 (EDRISELPEVLLLQILSSLPTKLVISTSVLSKRWLSLWKMVQRLEFE). LRR repeat units lie at residues 80–106 (IYDF…HLKV), 155–182 (ETLK…HLLS), 183–208 (VVYK…VLRR), 227–257 (TLLL…GIES), 277–302 (IRNV…SLDL), and 325–351 (THKV…KLID). An FBD domain is found at 370 to 417 (KWNQPKYVPECLETFMWRNCNWGREEEKEVATYILRNARQLKKATFST).

The sequence is that of F-box/FBD/LRR-repeat protein At3g51530 from Arabidopsis thaliana (Mouse-ear cress).